The sequence spans 378 residues: Anhydro-N-acetylmuramic acid kinase (378 aa).

23–30 (GTSMDGAD) is a binding site for ATP.

Belongs to the anhydro-N-acetylmuramic acid kinase family.

The enzyme catalyses 1,6-anhydro-N-acetyl-beta-muramate + ATP + H2O = N-acetyl-D-muramate 6-phosphate + ADP + H(+). It participates in amino-sugar metabolism; 1,6-anhydro-N-acetylmuramate degradation. The protein operates within cell wall biogenesis; peptidoglycan recycling. Functionally, catalyzes the specific phosphorylation of 1,6-anhydro-N-acetylmuramic acid (anhMurNAc) with the simultaneous cleavage of the 1,6-anhydro ring, generating MurNAc-6-P. Is required for the utilization of anhMurNAc either imported from the medium or derived from its own cell wall murein, and thus plays a role in cell wall recycling. The sequence is that of Anhydro-N-acetylmuramic acid kinase from Bordetella bronchiseptica (strain ATCC BAA-588 / NCTC 13252 / RB50) (Alcaligenes bronchisepticus).